Consider the following 219-residue polypeptide: Lipoprotein-releasing system ATP-binding protein LolD (219 aa).

The 217-residue stretch at isoleucine 3–glutamate 219 folds into the ABC transporter domain. ATP is bound at residue glycine 35–threonine 42.

The protein belongs to the ABC transporter superfamily. Lipoprotein translocase (TC 3.A.1.125) family. In terms of assembly, the complex is composed of two ATP-binding proteins (LolD) and two transmembrane proteins (LolC and LolE).

It is found in the cell inner membrane. Functionally, part of the ABC transporter complex LolCDE involved in the translocation of mature outer membrane-directed lipoproteins, from the inner membrane to the periplasmic chaperone, LolA. Responsible for the formation of the LolA-lipoprotein complex in an ATP-dependent manner. The protein is Lipoprotein-releasing system ATP-binding protein LolD of Porphyromonas gingivalis (strain ATCC BAA-308 / W83).